The chain runs to 143 residues: D-aminoacyl-tRNA deacylase (143 aa).

The Gly-cisPro motif, important for rejection of L-amino acids signature appears at 135-136 (GP).

Belongs to the DTD family. In terms of assembly, homodimer.

The protein resides in the cytoplasm. The enzyme catalyses glycyl-tRNA(Ala) + H2O = tRNA(Ala) + glycine + H(+). It catalyses the reaction a D-aminoacyl-tRNA + H2O = a tRNA + a D-alpha-amino acid + H(+). An aminoacyl-tRNA editing enzyme that deacylates mischarged D-aminoacyl-tRNAs. Also deacylates mischarged glycyl-tRNA(Ala), protecting cells against glycine mischarging by AlaRS. Acts via tRNA-based rather than protein-based catalysis; rejects L-amino acids rather than detecting D-amino acids in the active site. By recycling D-aminoacyl-tRNA to D-amino acids and free tRNA molecules, this enzyme counteracts the toxicity associated with the formation of D-aminoacyl-tRNA entities in vivo and helps enforce protein L-homochirality. The chain is D-aminoacyl-tRNA deacylase from Mycobacterium marinum (strain ATCC BAA-535 / M).